The chain runs to 126 residues: UPF0332 protein glr0978 (126 aa).

Belongs to the UPF0332 family.

The polypeptide is UPF0332 protein glr0978 (Gloeobacter violaceus (strain ATCC 29082 / PCC 7421)).